A 553-amino-acid chain; its full sequence is CTP synthase (553 aa).

The tract at residues 1 to 277 (MPTEPETDYD…DQYVMEELDI (277 aa)) is amidoligase domain. Ser26 is a binding site for CTP. Ser26 is a UTP binding site. Residues 27-32 (GLGKGI) and Asp84 contribute to the ATP site. Asp84 and Glu152 together coordinate Mg(2+). CTP contacts are provided by residues 159-161 (DIE), 198-203 (KTKPTQ), and Lys234. UTP is bound by residues 198–203 (KTKPTQ) and Lys234. A Glutamine amidotransferase type-1 domain is found at 307-544 (LVGKYDLEDA…LEAVLGDDPH (238 aa)). Gly364 is an L-glutamine binding site. Cys391 acts as the Nucleophile; for glutamine hydrolysis in catalysis. Residues 392-395 (LGFQ), Glu415, and Arg472 each bind L-glutamine. Active-site residues include His517 and Glu519.

It belongs to the CTP synthase family. As to quaternary structure, homotetramer.

The enzyme catalyses UTP + L-glutamine + ATP + H2O = CTP + L-glutamate + ADP + phosphate + 2 H(+). The catalysed reaction is L-glutamine + H2O = L-glutamate + NH4(+). It catalyses the reaction UTP + NH4(+) + ATP = CTP + ADP + phosphate + 2 H(+). It participates in pyrimidine metabolism; CTP biosynthesis via de novo pathway; CTP from UDP: step 2/2. Its activity is regulated as follows. Allosterically activated by GTP, when glutamine is the substrate; GTP has no effect on the reaction when ammonia is the substrate. The allosteric effector GTP functions by stabilizing the protein conformation that binds the tetrahedral intermediate(s) formed during glutamine hydrolysis. Inhibited by the product CTP, via allosteric rather than competitive inhibition. In terms of biological role, catalyzes the ATP-dependent amination of UTP to CTP with either L-glutamine or ammonia as the source of nitrogen. Regulates intracellular CTP levels through interactions with the four ribonucleotide triphosphates. The chain is CTP synthase from Haloarcula marismortui (strain ATCC 43049 / DSM 3752 / JCM 8966 / VKM B-1809) (Halobacterium marismortui).